A 131-amino-acid polypeptide reads, in one-letter code: Putative gamma-taxilin 2 (131 aa).

This sequence belongs to the taxilin family.

The polypeptide is Putative gamma-taxilin 2 (TXLNGY) (Pan troglodytes (Chimpanzee)).